The sequence spans 868 residues: Homeobox-leucine zipper protein HOX29 (868 aa).

Positions 9–72 (DASKYVRYTP…NRRCREKQRK (64 aa)) form a DNA-binding region, homeobox. The stretch at 64–106 (RRCREKQRKESSRLQALNRKLTAMNKLLMEENDRLQKQVSQLV) forms a coiled coil. The tract at residues 150 to 171 (VTSGHHHQQQQHNVVQPPPRDA) is disordered. Residues 169-397 (RDASPAGLMS…VAHEDTRSVI (229 aa)) enclose the START domain.

The protein belongs to the HD-ZIP homeobox family. Class III subfamily. As to expression, expressed in phloem.

The protein resides in the nucleus. Its function is as follows. Probable transcription factor that may be necessary for the proper patterning of vascular bundles. The polypeptide is Homeobox-leucine zipper protein HOX29 (HOX29) (Oryza sativa subsp. japonica (Rice)).